The primary structure comprises 305 residues: tRNA-splicing endonuclease (305 aa).

Residues Tyr246, His257, and Lys287 contribute to the active site.

The protein belongs to the tRNA-intron endonuclease family. Archaeal long subfamily. Homodimer.

It catalyses the reaction pretRNA = a 3'-half-tRNA molecule with a 5'-OH end + a 5'-half-tRNA molecule with a 2',3'-cyclic phosphate end + an intron with a 2',3'-cyclic phosphate and a 5'-hydroxyl terminus.. Functionally, endonuclease that removes tRNA introns. Cleaves pre-tRNA at the 5'- and 3'-splice sites to release the intron. The products are an intron and two tRNA half-molecules bearing 2',3' cyclic phosphate and 5'-OH termini. Recognizes a pseudosymmetric substrate in which 2 bulged loops of 3 bases are separated by a stem of 4 bp. In Archaeoglobus fulgidus (strain ATCC 49558 / DSM 4304 / JCM 9628 / NBRC 100126 / VC-16), this protein is tRNA-splicing endonuclease.